Here is a 536-residue protein sequence, read N- to C-terminus: Casein kinase I homolog RAG8 (536 aa).

Residues 26–42 (HSTQVLHGSGQHGMQPS) show a composition bias toward polar residues. The tract at residues 26-68 (HSTQVLHGSGQHGMQPSGNNVLNGLANGATGLQSSASSTSTRD) is disordered. The span at 43–65 (GNNVLNGLANGATGLQSSASSTS) shows a compositional bias: low complexity. The Protein kinase domain occupies 77-361 (YKIGKKIGEG…QKLDGEYDWM (285 aa)). Residues 83–91 (IGEGSFGVL) and K106 contribute to the ATP site. D196 acts as the Proton acceptor in catalysis. Polar residues-rich tracts occupy residues 407–420 (NNLN…QSHS) and 427–436 (DLTQGVSNAP). Positions 407-524 (NNLNGSNVPL…NGKVQVADSN (118 aa)) are disordered. Low complexity-rich tracts occupy residues 437 to 453 (QQPQ…QHTQ) and 463 to 514 (AYKQ…NQPQ). S-palmitoyl cysteine attachment occurs at residues C535 and C536.

It belongs to the protein kinase superfamily. CK1 Ser/Thr protein kinase family. Casein kinase I subfamily.

It catalyses the reaction L-seryl-[protein] + ATP = O-phospho-L-seryl-[protein] + ADP + H(+). The catalysed reaction is L-threonyl-[protein] + ATP = O-phospho-L-threonyl-[protein] + ADP + H(+). Casein kinases are operationally defined by their preferential utilization of acidic proteins such as caseins as substrates. In Kluyveromyces lactis (strain ATCC 8585 / CBS 2359 / DSM 70799 / NBRC 1267 / NRRL Y-1140 / WM37) (Yeast), this protein is Casein kinase I homolog RAG8 (RAG8).